Consider the following 698-residue polypeptide: MMELITELFDEDTTLPITNLNPKKKIPQIFSVHVDDAIEQPGFRLCTYTSGGDTNRDLKMGDKMMHIVPFTLTAKGSIAKLKGLGPSPINYINSVFTVAMQTMRQYKIDACMLRILKSKTAGQARQIQVIADRLIRSRSGGRYVLLKELWDYDKKYAYILIHRKNVSLEDIPGVPEISTELFTKVESKVGDVYINKDTGAQVTKNEAIAASIAQENDKRTDQAVIVKVKISRRAIAQSQSLESSRFESELFQKYESTAANFNKPATAPLIPEAEEMKIGINSLASKTKAAKIIAEGTANELHYDYKFFSKSEVDEVSEKIKDVIFNAIKNEPTTSIKCLEKYAAAVNQFFEEYKDNWLDKHNKTRKGQPDEVWGEITKNAWNAAKTKFLKRMIYSFSGIGAGPMIDITIACDGSKYTPSQKRGIREYCGSGYTDINNLLLGRYNPERYDVMSEKEIESAINNLDSAFENGDRIPEGITVYRAQSMTAPIYEALVKNKVFYFRNFVSTSLTPIIFGRFGITHAGIGLLEPEARNELTVDKNEEGITINPNEIRAYKENPEYVKVQIGWAIDGAHKVNVVYPGSLGIATEAEVILPRGLMVKVNKITDASNNDGTTSNNTKLIQAEVMTTEELTESVIYDGDRLMETGEVVAMTGDIEIEDRVDFASFVSSNVKQKVESSLGIIASCIDITNMPYKFVQG.

In terms of domain architecture, TR mART core spans 375–628; the sequence is EITKNAWNAA…KLIQAEVMTT (254 aa). Residues Arg481, Ser506, and Glu590 contribute to the active site.

It belongs to the Tevenvirinae NAD(+)--arginine ADP-ribosyltransferase family. Proteolytic cleavages at the N- and C-termini by the prohead core protein protease give rise to the mature enzyme.

Its subcellular location is the virion. It carries out the reaction L-arginyl-[protein] + NAD(+) = N(omega)-(ADP-D-ribosyl)-L-arginyl-[protein] + nicotinamide + H(+). Its function is as follows. ADP-ribosyltransferase that efficiently ADP-ribosylates one of the two alpha subunits of host RNA polymerase RPOA on an arginine located in the C-terminal region. ADP-ribosylation of RPOA alpha subunit enhances the transcription of viral early genes. Also ribosylates RPOA subunits beta, beta' and sigma 70 and performs an autoribosylation reaction. This Escherichia coli (Bacteriophage T2) protein is NAD(+)--arginine ADP-ribosyltransferase (alt).